Here is a 729-residue protein sequence, read N- to C-terminus: Elongation factor 2 (729 aa).

The tr-type G domain maps to 19–262 (EQIRNIAIAA…MVCEHFPNPI (244 aa)). Residues 28–35 (AHVDHGKT), 94–98 (DTPGH), and 148–151 (NKVD) contribute to the GTP site. Residue histidine 597 is modified to Diphthamide.

This sequence belongs to the TRAFAC class translation factor GTPase superfamily. Classic translation factor GTPase family. EF-G/EF-2 subfamily.

Its subcellular location is the cytoplasm. In terms of biological role, catalyzes the GTP-dependent ribosomal translocation step during translation elongation. During this step, the ribosome changes from the pre-translocational (PRE) to the post-translocational (POST) state as the newly formed A-site-bound peptidyl-tRNA and P-site-bound deacylated tRNA move to the P and E sites, respectively. Catalyzes the coordinated movement of the two tRNA molecules, the mRNA and conformational changes in the ribosome. The polypeptide is Elongation factor 2 (Halomicrobium mukohataei (strain ATCC 700874 / DSM 12286 / JCM 9738 / NCIMB 13541) (Haloarcula mukohataei)).